Reading from the N-terminus, the 207-residue chain is Ribosomal RNA large subunit methyltransferase E (207 aa).

5 residues coordinate S-adenosyl-L-methionine: Gly-61, Trp-63, Asp-81, Asp-97, and Asp-122. Residue Lys-162 is the Proton acceptor of the active site.

The protein belongs to the class I-like SAM-binding methyltransferase superfamily. RNA methyltransferase RlmE family.

It is found in the cytoplasm. The enzyme catalyses uridine(2552) in 23S rRNA + S-adenosyl-L-methionine = 2'-O-methyluridine(2552) in 23S rRNA + S-adenosyl-L-homocysteine + H(+). Its function is as follows. Specifically methylates the uridine in position 2552 of 23S rRNA at the 2'-O position of the ribose in the fully assembled 50S ribosomal subunit. This is Ribosomal RNA large subunit methyltransferase E from Pseudomonas putida (strain ATCC 700007 / DSM 6899 / JCM 31910 / BCRC 17059 / LMG 24140 / F1).